A 463-amino-acid chain; its full sequence is Succinate--CoA ligase [ADP-forming] subunit beta, mitochondrial (463 aa).

A mitochondrion-targeting transit peptide spans 1–52 (MAASMFYGRLVAVATLRNHRPRTAQRAAAQVLGSSGLFNNHGLQVQQQQQRN). One can recognise an ATP-grasp domain in the interval 61–288 (MELLQEAGVS…SNSAYRQKKI (228 aa)). N6-acetyllysine is present on K78. Y84 carries the phosphotyrosine modification. K88 carries the post-translational modification N6-acetyllysine; alternate. K88 carries the N6-succinyllysine; alternate modification. Residues K98 and 105–107 (GRG) each bind ATP. N6-acetyllysine occurs at positions 129, 139, 143, and 216. Mg(2+)-binding residues include N258 and D272. Residue S279 is modified to Phosphoserine. N323 contacts substrate. T341 carries the post-translational modification Phosphothreonine. K368 is subject to N6-acetyllysine. 380 to 382 (GIM) serves as a coordination point for substrate.

This sequence belongs to the succinate/malate CoA ligase beta subunit family. ATP-specific subunit beta subfamily. As to quaternary structure, heterodimer of an alpha and a beta subunit. The beta subunit determines specificity for ATP. Interacts with ALAS2. Mg(2+) serves as cofactor. In terms of tissue distribution, widely expressed. Not expressed in liver and lung.

It is found in the mitochondrion. It carries out the reaction succinate + ATP + CoA = succinyl-CoA + ADP + phosphate. The protein operates within carbohydrate metabolism; tricarboxylic acid cycle; succinate from succinyl-CoA (ligase route): step 1/1. With respect to regulation, inhibited by itaconate. ATP-specific succinyl-CoA synthetase functions in the citric acid cycle (TCA), coupling the hydrolysis of succinyl-CoA to the synthesis of ATP and thus represents the only step of substrate-level phosphorylation in the TCA. The beta subunit provides nucleotide specificity of the enzyme and binds the substrate succinate, while the binding sites for coenzyme A and phosphate are found in the alpha subunit. This Homo sapiens (Human) protein is Succinate--CoA ligase [ADP-forming] subunit beta, mitochondrial.